The sequence spans 84 residues: RQC P-site tRNA stabilizing factor (84 aa).

The S4 RNA-binding domain maps to 1-64 (MRIDKFLQSV…IEEYTILQIP (64 aa)).

Belongs to the RqcP family. Associates with stalled 50S ribosomal subunits. Binds to RqcH, 23S rRNA and the P-site tRNA. Does not require RqcH for association with 50S subunits.

Key component of the ribosome quality control system (RQC), a ribosome-associated complex that mediates the extraction of incompletely synthesized nascent chains from stalled ribosomes and their subsequent degradation. RqcH recruits Ala-charged tRNA, and with RqcP directs the elongation of stalled nascent chains on 50S ribosomal subunits, leading to non-templated C-terminal alanine extensions (Ala tail). The Ala tail promotes nascent chain degradation. RqcP is associated with the translocation-like movement of the peptidyl-tRNA from the A-site into the P-site. The polypeptide is RQC P-site tRNA stabilizing factor (Helicobacter pylori (strain ATCC 700392 / 26695) (Campylobacter pylori)).